A 456-amino-acid chain; its full sequence is Smoothelin-like protein 2 (456 aa).

Residues 24–88 (LEGAVRALHE…RQVEALGLAT (65 aa)) adopt a coiled-coil conformation. Residue T96 is modified to Phosphothreonine. S98, S126, and S131 each carry phosphoserine. Residues 120–129 (HATFSLSGRS) show a composition bias toward polar residues. 3 disordered regions span residues 120–140 (HATF…ASDL), 154–190 (GHQL…RMPH), and 220–310 (VGGF…GAQA). Residues 131 to 140 (SVEHDEASDL) are compositionally biased toward basic and acidic residues. A compositionally biased stretch (polar residues) spans 163 to 174 (NGSSEVQTSSAQ). Low complexity predominate over residues 242–251 (SSSFTRSLSG). S250, S252, and S265 each carry phosphoserine. The segment covering 268-279 (LVTPPQSPPSSQ) has biased composition (pro residues). T270 is subject to Phosphothreonine. S274 carries the phosphoserine modification. Positions 298–308 (RSQTLPRTSGA) are enriched in polar residues. At S339 the chain carries Phosphoserine. The region spanning 346–453 (SSIKQILLEW…YVQSLYNHLR (108 aa)) is the Calponin-homology (CH) domain.

Belongs to the smoothelin family.

In Mus musculus (Mouse), this protein is Smoothelin-like protein 2 (Smtnl2).